We begin with the raw amino-acid sequence, 199 residues long: Interferon kappa (199 aa).

An N-terminal signal peptide occupies residues 1-21; it reads MTPKFLWLVALVALYIPPIQS. Cystine bridges form between Cys-24–Cys-119 and Cys-49–Cys-162.

It belongs to the alpha/beta interferon family. In terms of tissue distribution, expressed at low levels in peritoneal macrophages.

Its subcellular location is the secreted. In terms of biological role, may play a role in the regulation of immune cell function. The protein is Interferon kappa (Ifnk) of Mus musculus (Mouse).